A 155-amino-acid polypeptide reads, in one-letter code: Fibroblast growth factor 2 (155 aa).

A propeptide spanning residues 1–9 is cleaved from the precursor; sequence MAAGSITTL. Positions 1–20 are disordered; the sequence is MAAGSITTLPALPEDGGSSA. Position 36 (Asn36) interacts with heparin. Residues 46–48 carry the Cell attachment site; atypical motif; it reads DGR. The residue at position 82 (Tyr82) is a Phosphotyrosine; by TEC. The Cell attachment site; atypical signature appears at 88-90; the sequence is DGR. Lys95 participates in a covalent cross-link: Glycyl lysine isopeptide (Lys-Gly) (interchain with G-Cter in SUMO1). Positions 128–144 are heparin-binding; the sequence is KRTGQYKLGPKTGPGQK.

Belongs to the heparin-binding growth factors family. In terms of assembly, monomer. Homodimer. Interacts with FGFR1, FGFR2, FGFR3 and FGFR4. Affinity between fibroblast growth factors (FGFs) and their receptors is increased by heparan sulfate glycosaminoglycans that function as coreceptors. Interacts with CSPG4, FGFBP1 and TEC. Found in a complex with FGFBP1, FGF1 and FGF2. Interacts with FGFBP3. Interacts with integrin ITGAV:ITGB3; the interaction is required for FGF2 signaling. Interacts with SNORC (via the extracellular domain). Interacts with glypican GPC3. Post-translationally, phosphorylation at Tyr-82 regulates FGF2 unconventional secretion.

It localises to the secreted. Its subcellular location is the nucleus. Acts as a ligand for FGFR1, FGFR2, FGFR3 and FGFR4. Also acts as an integrin ligand which is required for FGF2 signaling. Binds to integrin ITGAV:ITGB3. Plays an important role in the regulation of cell survival, cell division, cell differentiation and cell migration. Functions as a potent mitogen in vitro. Can induce angiogenesis. Mediates phosphorylation of ERK1/2 and thereby promotes retinal lens fiber differentiation. This chain is Fibroblast growth factor 2 (FGF2), found in Ovis aries (Sheep).